A 503-amino-acid chain; its full sequence is SH2 domain-containing adapter protein B (503 aa).

Disordered stretches follow at residues 1 to 49 and 61 to 81; these read MAKW…QACS and CFSA…DLIR. S101 is modified (phosphoserine). The segment covering 147–157 has biased composition (low complexity); sequence AAASSSSSSGS. The segment at 147-180 is disordered; that stretch reads AAASSSSSSGSPHLYRSSSERRPTTPAEVRYISP. Residue K186 forms a Glycyl lysine isopeptide (Lys-Gly) (interchain with G-Cter in SUMO2) linkage. Disordered regions lie at residues 225–262, 292–333, and 345–381; these read ETGA…SAGY, DTPY…YDQP, and AAQF…IKHG. Basic and acidic residues predominate over residues 244–256; it reads FDAKSDLKSKAGK. Phosphoserine is present on residues S301 and S311. Residues 301–311 are compositionally biased toward polar residues; it reads SVDSDSESTVS. Residues 313–328 show a composition bias toward basic and acidic residues; that stretch reads RLRESKLPQDDDRPAD. S382 bears the Phosphoserine mark. The SH2 domain maps to 404 to 498; the sequence is WYHGAISRSD…AEHLSLLYPV (95 aa).

As to quaternary structure, interacts with phosphorylated 'Tyr-720' of the ligand-activated receptor PDGFRA via its SH2 domain. Interacts with the ligand-activated receptors PDGFRB, FGFR1, KDR/VEGFR2, IL2RB and IL2RG. Interacts with EPS8 and V-SRC. Interacts with GRB2 and GRAP. Interacts with CD3Z. Interacts with tyrosine-phosphorylated LAT upon T-cell antigen receptor activation. Interacts with PLCG1. Interacts with ZAP70, LCP2/SLP-76, VAV1 and GRAP2. Interacts with JAK1 and JAK3. Interacts with PTK2/FAK1. Interacts with CRK/CrKII. Interacts with IRS2. Interacts with PTPN11. Phosphorylated upon PDGFRA, PDGFRB, TCR, IL2 receptor, FGFR1 or VEGFR2 activation. In terms of tissue distribution, expressed in heart, liver, brain and kidney (at protein level).

It localises to the cytoplasm. It is found in the cell membrane. Its function is as follows. Adapter protein which regulates several signal transduction cascades by linking activated receptors to downstream signaling components. May play a role in angiogenesis by regulating FGFR1, VEGFR2 and PDGFR signaling. May also play a role in T-cell antigen receptor/TCR signaling, interleukin-2 signaling, apoptosis and neuronal cells differentiation by mediating basic-FGF and NGF-induced signaling cascades. May also regulate IRS1 and IRS2 signaling in insulin-producing cells. The protein is SH2 domain-containing adapter protein B (Shb) of Mus musculus (Mouse).